Here is a 355-residue protein sequence, read N- to C-terminus: Fructose-1,6-bisphosphatase class 1 (355 aa).

Residues E94, D116, L118, and D119 each contribute to the Mg(2+) site. Substrate contacts are provided by residues 119–122 (DGSS), N211, and 263–265 (YLY). E283 lines the Mg(2+) pocket.

Belongs to the FBPase class 1 family. In terms of assembly, homotetramer. Mg(2+) is required as a cofactor.

The protein localises to the cytoplasm. The enzyme catalyses beta-D-fructose 1,6-bisphosphate + H2O = beta-D-fructose 6-phosphate + phosphate. It functions in the pathway carbohydrate biosynthesis; Calvin cycle. The polypeptide is Fructose-1,6-bisphosphatase class 1 (Rhodospirillum rubrum (strain ATCC 11170 / ATH 1.1.1 / DSM 467 / LMG 4362 / NCIMB 8255 / S1)).